The chain runs to 519 residues: Cell division cycle protein 20 homolog B (519 aa).

The segment at 77 to 106 is disordered; that stretch reads WQLSPARDPESSSSVEEGPPSHTPESLASG. The span at 87 to 96 shows a compositional bias: low complexity; sequence SSSSVEEGPP. WD repeat units lie at residues 229-266, 271-310, 353-392, 399-441, 443-484, and 487-519; these read RNDYYLNTLDWSSQNLVAVALGTSVYIWNGQNHSWIEN, VCCHYVSSVTWMREGSCLAVGTSEGEVQLWDAITKKQLRN, YHKEAVCSLKWSPDGRLLSSGCNDGLLTIWPHDPGAGVQG, PQST…NIQT, STQS…RSGG, and GHRDRVLHLSLSPDQTRLFSAAADGTACVWKCC.

This sequence belongs to the WD repeat CDC20/Fizzy family. As to expression, expressed in multiciliated cells (MCCs).

It localises to the cytoplasm. Protein regulator of centriole-deuterosome disengagement and subsequently participates in the ciliogenesis in multiciliated cells (MCCs). The protein is Cell division cycle protein 20 homolog B of Mus musculus (Mouse).